We begin with the raw amino-acid sequence, 461 residues long: CUGBP Elav-like family member 3 (461 aa).

RRM domains follow at residues 7–88 and 95–175; these read IKLF…PADS and RKLF…FADT. Residues 345–358 are compositionally biased toward pro residues; sequence PPALVAQQPPPPPQ. The interval 345-375 is disordered; it reads PPALVAQQPPPPPQQQQQQQQQQQQREGPDG. A compositionally biased stretch (low complexity) spans 359 to 369; the sequence is QQQQQQQQQQQ. One can recognise an RRM 3 domain in the interval 376-454; sequence CNIFIYHLPQ…KRLKVQLKRP (79 aa).

This sequence belongs to the CELF/BRUNOL family.

The protein localises to the nucleus. The protein resides in the cytoplasm. In terms of biological role, RNA-binding protein involved in the regulation of pre-mRNA alternative splicing. Mediates exon inclusion and/or exclusion in pre-mRNA that are subject to tissue-specific and developmentally regulated alternative splicing. Specifically activates exon 5 inclusion of cardiac isoforms of TNNT2 during heart remodeling at the juvenile to adult transition. Activates the splicing of MAPT/Tau exon 10. Binds to muscle-specific splicing enhancer (MSE) intronic sites flanking the alternative exon 5 of TNNT2 pre-mRNA. The protein is CUGBP Elav-like family member 3 (CELF3) of Bos taurus (Bovine).